The sequence spans 712 residues: Eukaryotic peptide chain release factor GTP-binding subunit (712 aa).

Residues 1–23 are compositionally biased toward polar residues; it reads MSNPQDQLSNDLANASISGDQSK. Disordered regions lie at residues 1 to 64, 76 to 115, 132 to 162, and 184 to 256; these read MSNP…QYGG, GYQQ…QQQY, PQQQ…ASLN, and TKKV…APVS. A several sort of repeats region spans residues 16 to 143; sequence SISGDQSKQP…QQQQQQTQSQ (128 aa). Composition is skewed to low complexity over residues 24–35 and 48–64; these read QPQQQQPQQQQP and TGGY…QYGG. Composition is skewed to low complexity over residues 132-141 and 190-201; these read PQQQQQQQTQ and AKPAASKEASPA. A charged region spans residues 144–282; the sequence is GMSLADFQKQ…DEVDEEVVKD (139 aa). Basic and acidic residues predominate over residues 202-217; sequence PKDEEASAEPEAKKES. The span at 218 to 256 shows a compositional bias: low complexity; sequence TPVPASSSPAPAAADSTPAPVKKESTPTPSVASKSAPVS. Positions 287–512 constitute a tr-type G domain; that stretch reads KDHVSIIFMG…YLDNMDTMNR (226 aa). The G1 stretch occupies residues 296-303; that stretch reads GHVDAGKS. A GTP-binding site is contributed by 296 to 303; that stretch reads GHVDAGKS. The tract at residues 352–356 is G2; that stretch reads GKTIE. A Phosphothreonine modification is found at Thr-370. The segment at 373–376 is G3; it reads DAPG. GTP is bound by residues 373–377 and 435–438; these read DAPGH and NKMD. The G4 stretch occupies residues 435-438; the sequence is NKMD. The segment at 476-478 is G5; it reads SGY.

This sequence belongs to the TRAFAC class translation factor GTPase superfamily. Classic translation factor GTPase family. ERF3 subfamily.

It localises to the cytoplasm. Its function is as follows. Involved in translation termination. Stimulates the activity of ERF1. Binds guanine nucleotides. This is Eukaryotic peptide chain release factor GTP-binding subunit (SUP35) from Candida maltosa (Yeast).